The sequence spans 549 residues: Glucose-6-phosphate isomerase (549 aa).

Glu-355 acts as the Proton donor in catalysis. Residues His-386 and Lys-514 contribute to the active site.

This sequence belongs to the GPI family.

Its subcellular location is the cytoplasm. It carries out the reaction alpha-D-glucose 6-phosphate = beta-D-fructose 6-phosphate. It functions in the pathway carbohydrate biosynthesis; gluconeogenesis. The protein operates within carbohydrate degradation; glycolysis; D-glyceraldehyde 3-phosphate and glycerone phosphate from D-glucose: step 2/4. Functionally, catalyzes the reversible isomerization of glucose-6-phosphate to fructose-6-phosphate. The chain is Glucose-6-phosphate isomerase from Cronobacter sakazakii (strain ATCC BAA-894) (Enterobacter sakazakii).